The chain runs to 233 residues: Large ribosomal subunit protein uL1 (233 aa).

The protein belongs to the universal ribosomal protein uL1 family. In terms of assembly, part of the 50S ribosomal subunit.

Its function is as follows. Binds directly to 23S rRNA. The L1 stalk is quite mobile in the ribosome, and is involved in E site tRNA release. Functionally, protein L1 is also a translational repressor protein, it controls the translation of the L11 operon by binding to its mRNA. The sequence is that of Large ribosomal subunit protein uL1 from Photobacterium profundum (strain SS9).